The primary structure comprises 215 residues: Histone H1.1 (215 aa).

The disordered stretch occupies residues 1 to 43; it reads MSETVPPAPAASAAPEKPLAGKKAKKPAKAAAASKKKPAGPSV. S2 carries the post-translational modification N-acetylserine. 2 positions are modified to phosphoserine: S2 and S12. An N6-acetyllysine modification is found at K17. Over residues 20 to 38 the composition is skewed to basic residues; the sequence is AGKKAKKPAKAAAASKKKP. N6-(beta-hydroxybutyryl)lysine is present on K37. The H15 domain occupies 39–112; it reads AGPSVSELIV…GASGSFKLNK (74 aa). S44 is subject to Phosphoserine. K55 is subject to N6-(beta-hydroxybutyryl)lysine. Residue R57 is modified to Citrulline. K67 is subject to N6-(beta-hydroxybutyryl)lysine. K78 carries the post-translational modification N6-acetyllysine. The residue at position 88 (K88) is an N6-(beta-hydroxybutyryl)lysine. N6-(beta-hydroxybutyryl)lysine; alternate is present on K93. An N6-acetyllysine; alternate modification is found at K93. The segment at 94-215 is disordered; sequence GTLVQTKGTG…KPKKAAPKKK (122 aa). S107 is subject to Phosphoserine. The residue at position 109 (K109) is an N6-(beta-hydroxybutyryl)lysine. The segment covering 122–147 has biased composition (low complexity); the sequence is GASKVATKTKATGASKKLKKATGASK. N6-acetyllysine is present on K125. Composition is skewed to basic residues over residues 148 to 181 and 188 to 215; these read KSVK…KKVA and KAVK…PKKK. Residue T204 is modified to Phosphothreonine.

Belongs to the histone H1/H5 family. As to quaternary structure, interacts with DFFB. H1 histones are progressively phosphorylated during the cell cycle, becoming maximally phosphorylated during late G2 phase and M phase, and being dephosphorylated sharply thereafter. In terms of processing, citrullination at Arg-57 (H1R54ci) by PADI4 takes place within the DNA-binding site of H1 and results in its displacement from chromatin and global chromatin decondensation, thereby promoting pluripotency and stem cell maintenance.

It localises to the nucleus. The protein localises to the chromosome. Histone H1 protein binds to linker DNA between nucleosomes forming the macromolecular structure known as the chromatin fiber. Histones H1 are necessary for the condensation of nucleosome chains into higher-order structured fibers. Also acts as a regulator of individual gene transcription through chromatin remodeling, nucleosome spacing and DNA methylation. The protein is Histone H1.1 of Homo sapiens (Human).